We begin with the raw amino-acid sequence, 572 residues long: Urease subunit alpha (572 aa).

Residues 134–572 enclose the Urease domain; sequence GGIDSHIHFI…LPMTQRYFLF (439 aa). Positions 139, 141, and 222 each coordinate Ni(2+). Lys-222 is subject to N6-carboxylysine. Residue His-224 coordinates substrate. The Ni(2+) site is built by His-251 and His-277. His-325 serves as the catalytic Proton donor. Asp-365 is a binding site for Ni(2+).

This sequence belongs to the metallo-dependent hydrolases superfamily. Urease alpha subunit family. In terms of assembly, heterotrimer of UreA (gamma), UreB (beta) and UreC (alpha) subunits. Three heterotrimers associate to form the active enzyme. It depends on Ni cation as a cofactor. In terms of processing, carboxylation allows a single lysine to coordinate two nickel ions.

The protein localises to the cytoplasm. The enzyme catalyses urea + 2 H2O + H(+) = hydrogencarbonate + 2 NH4(+). The protein operates within nitrogen metabolism; urea degradation; CO(2) and NH(3) from urea (urease route): step 1/1. The polypeptide is Urease subunit alpha (Polaromonas sp. (strain JS666 / ATCC BAA-500)).